Reading from the N-terminus, the 325-residue chain is Beta-ketoacyl-[acyl-carrier-protein] synthase III (325 aa).

Active-site residues include Cys-112 and His-250. The ACP-binding stretch occupies residues 251–255 (QANSR). Asn-280 is an active-site residue.

The protein belongs to the thiolase-like superfamily. FabH family. In terms of assembly, homodimer.

It is found in the cytoplasm. It catalyses the reaction malonyl-[ACP] + acetyl-CoA + H(+) = 3-oxobutanoyl-[ACP] + CO2 + CoA. It functions in the pathway lipid metabolism; fatty acid biosynthesis. Catalyzes the condensation reaction of fatty acid synthesis by the addition to an acyl acceptor of two carbons from malonyl-ACP. Catalyzes the first condensation reaction which initiates fatty acid synthesis and may therefore play a role in governing the total rate of fatty acid production. Possesses both acetoacetyl-ACP synthase and acetyl transacylase activities. Its substrate specificity determines the biosynthesis of branched-chain and/or straight-chain of fatty acids. The protein is Beta-ketoacyl-[acyl-carrier-protein] synthase III of Lactococcus lactis subsp. lactis (strain IL1403) (Streptococcus lactis).